We begin with the raw amino-acid sequence, 417 residues long: Mitochondrial inner membrane i-AAA protease supercomplex subunit MGR1 (417 aa).

Residues 1 to 28 (MAVFTPPSGNSNSTDHTHTQDDHDKDDN) form a disordered region. Over 1–56 (MAVFTPPSGNSNSTDHTHTQDDHDKDDNDIKKFYIRPSLGLKLWGPLVPAPDNLPG) the chain is Mitochondrial intermembrane. A compositionally biased stretch (basic and acidic residues) spans 15–28 (DHTHTQDDHDKDDN). The helical transmembrane segment at 57–73 (LYTLITIQSAVGFFALW) threads the bilayer. The Mitochondrial matrix portion of the chain corresponds to 74–151 (RLRRLYKLPP…RQSRFVSVRK (78 aa)). A helical membrane pass occupies residues 152–169 (LLWGLFGSLLLSQSLLEL). The Mitochondrial intermembrane segment spans residues 170–417 (TRLNFLKYDP…PKALTNEKTH (248 aa)). Residues 391–401 (SHTKTPTSTDQ) show a composition bias toward polar residues. Residues 391–417 (SHTKTPTSTDQPLPGPTPKALTNEKTH) are disordered.

Belongs to the MGR1 family. As to quaternary structure, component of the mitochondrial inner membrane i-AAA protease supercomplex composed of MGR1, MGR3 and YME1. With MGR3, forms a subcomplex that binds to YME1 and to substrates to facilitate proteolysis. Interacts directly with YME1.

It is found in the mitochondrion inner membrane. Component of the mitochondrial inner membrane i-AAA protease supercomplex required for mitochondrial inner membrane protein turnover. Together with MGR3, functions in an adapter complex that targets substrates to the i-AAA protease for degradation. Required for growth of cells lacking the mitochondrial genome. This is Mitochondrial inner membrane i-AAA protease supercomplex subunit MGR1 (MGR1) from Saccharomyces cerevisiae (strain ATCC 204508 / S288c) (Baker's yeast).